A 166-amino-acid chain; its full sequence is Lipoprotein signal peptidase (166 aa).

Transmembrane regions (helical) follow at residues 11–31 (VWLWLSLLLLVVDFASKTLVV), 42–62 (LLPVFSITYVHNYGAAYSFLS), 67–87 (WQRWFLSAIAIAISGLLVWWL), and 90–110 (LPATNKVLCAAYSLVLAGAIG). Catalysis depends on residues Asp123 and Asp141. Residues 133–153 (HFPVFNVADCAICIGAALLLF) traverse the membrane as a helical segment.

This sequence belongs to the peptidase A8 family.

It is found in the cell inner membrane. It carries out the reaction Release of signal peptides from bacterial membrane prolipoproteins. Hydrolyzes -Xaa-Yaa-Zaa-|-(S,diacylglyceryl)Cys-, in which Xaa is hydrophobic (preferably Leu), and Yaa (Ala or Ser) and Zaa (Gly or Ala) have small, neutral side chains.. It participates in protein modification; lipoprotein biosynthesis (signal peptide cleavage). This protein specifically catalyzes the removal of signal peptides from prolipoproteins. In Pseudoalteromonas translucida (strain TAC 125), this protein is Lipoprotein signal peptidase.